We begin with the raw amino-acid sequence, 236 residues long: MDSEIVERLTKLGFVKTSHTHIAGEPLVIHAVAGAGKTTLLRSLLELPGVEVFTGGEHDPPNLSGKYIRCAAPPVAGAYNILDEYPAYPNWRSQPWNVLIADNLQYKEPTARAHYTCNRTHRLGQLTVDALRRVGFDITFAGTQTEDYGFQEGHLYTSQFYGQVISLDTQAHKIAVRHGLAPLSALETRGLEFDETTVITTKTSLEEVKDRHMVYVALTRHRRTCHLYTAHFAPSA.

The 117-residue stretch at Met1–Cys117 folds into the (+)RNA virus helicase ATP-binding domain. The (+)RNA virus helicase C-terminal domain maps to Asn118 to Ala236.

It belongs to the Tymovirales TGBp1 protein family. As to quaternary structure, homodimer and homooligomer. Interacts with capsid protein. Interacts with host AGO1; this interaction targets the host protein for degradation, thereby suppressing the antiviral RNA silencing.

It localises to the host cytoplasm. Functionally, transports viral genome to neighboring plant cells directly through plasmosdesmata, without any budding. The movement protein allows efficient cell to cell propagation, by bypassing the host cell wall barrier. Increases plasmodesma size exclusion limit. Acts as a suppressor of RNA-mediated gene silencing, also known as post-transcriptional gene silencing (PTGS), a mechanism of plant viral defense that limits the accumulation of viral RNAs. This chain is Movement and silencing protein TGBp1, found in Setaria italica (Foxtail millet).